Consider the following 245-residue polypeptide: Type I iodothyronine deiodinase (245 aa).

The Extracellular segment spans residues 1–9; sequence LSIRVLLHK. Residues 10–30 traverse the membrane as a helical; Signal-anchor for type III membrane protein segment; sequence LLILLQVTLSVVVGKTMMILF. Residues 31–245 are Cytoplasmic-facing; the sequence is PDTTKRYILK…EIRAVLEKLK (215 aa). U123 is an active-site residue. A non-standard amino acid (selenocysteine) is located at residue U123.

This sequence belongs to the iodothyronine deiodinase family. Predominantly monomer. Can form homodimers but homodimerization is not essential for enzyme activity.

The protein resides in the cell membrane. It localises to the endoplasmic reticulum membrane. It is found in the basolateral cell membrane. The enzyme catalyses 3,3',5-triiodo-L-thyronine + iodide + A + H(+) = L-thyroxine + AH2. It catalyses the reaction 3,3',5'-triiodo-L-thyronine + iodide + A + H(+) = L-thyroxine + AH2. The catalysed reaction is 3,3'-diiodo-L-thyronine + iodide + A + H(+) = 3,3',5'-triiodo-L-thyronine + AH2. It carries out the reaction 3,3'-diiodo-L-thyronine + iodide + A + H(+) = 3,3',5-triiodo-L-thyronine + AH2. The enzyme catalyses 3'-iodo-L-thyronine + iodide + A + H(+) = 3',5'-diiodo-L-thyronine + AH2. It catalyses the reaction 3-iodo-L-thyronine + iodide + A + H(+) = 3,5-diiodo-L-thyronine + AH2. The catalysed reaction is 3-iodo-L-thyronine + iodide + A + H(+) = 3,3'-diiodo-L-thyronine + AH2. It carries out the reaction 3,3'-diiodothyronamine + iodide + A + H(+) = 3,3',5'-triiodothyronamine + AH2. The enzyme catalyses 3'-iodothyronamine + iodide + A + H(+) = 3',5'-diiodothyronamine + AH2. It catalyses the reaction 3-iodothyronamine + iodide + A + H(+) = 3,3'-diiodothyronamine + AH2. The catalysed reaction is 3,3'-diiodothyronamine + iodide + A + H(+) = 3,3',5-triiodothyronamine + AH2. It carries out the reaction 3-iodothyronamine + iodide + A + H(+) = 3,5-diiodothyronamine + AH2. The enzyme catalyses 3,3'-diiodo-L-thyronine sulfate + iodide + A + H(+) = 3,3',5'-triiodo-L-thyronine sulfate + AH2. It catalyses the reaction 3,3',5'-triiodo-L-thyronine sulfate + iodide + A + H(+) = L-thyroxine sulfate + AH2. The catalysed reaction is 3,3'-diiodo-L-thyronine sulfate + iodide + A + H(+) = 3,3',5-triiodo-L-thyronine sulfate + AH2. Functionally, plays a crucial role in the metabolism of thyroid hormones (TH) and has specific roles in TH activation and inactivation by deiodination. Catalyzes the deiodiantion of L-thyroxine (T4) to 3,5,3'-triiodothyronine (T3) and 3,3',5'-triiodothyronine (rT3) to 3,3'-diiodothyronine (3,3'-T2) via outer-ring deiodination (ORD). Catalyzes the deiodiantion of T4 to rT3, T3 to 3,3'-T2, 3,5-diiodothyronine (3,5-T2) to 3-monoiodothyronine (3-T1) and 3,3'-T2 to 3-T1 via inner-ring deiodination (IRD). Catalyzes the deiodiantion of 3',5'-diiodothyronine (3',5'-T2) to 3'-monoiodothyronine (3'-T1) via ORD. Catalyzes the phenolic ring deiodinations of 3,3',5'-triiodothyronamine, 3',5'-diiodothyronamine and 3,3'-diiodothyronamine as well as tyrosyl ring deiodinations of 3,5,3'-triiodothyronamine and 3,5-diiodothyronamine. Catalyzes the deiodination of L-thyroxine sulfate and 3,3',5-triiodo-L-thyronine sulfate via IRD and of 3,3',5'-triiodo-L-thyronine sulfate via ORD. In Gallus gallus (Chicken), this protein is Type I iodothyronine deiodinase (DIO1).